We begin with the raw amino-acid sequence, 83 residues long: RNA-binding protein Hfq (83 aa).

Residues 10-70 form the Sm domain; the sequence is DTFLNQVRKE…ISTVMPLRPI (61 aa).

Belongs to the Hfq family. Homohexamer.

RNA chaperone that binds small regulatory RNA (sRNAs) and mRNAs to facilitate mRNA translational regulation in response to envelope stress, environmental stress and changes in metabolite concentrations. Also binds with high specificity to tRNAs. The chain is RNA-binding protein Hfq from Desulfitobacterium hafniense (strain Y51).